The sequence spans 398 residues: Secreted aspartic protease 3 (398 aa).

The N-terminal stretch at 1–18 (MFLKNIFIALAIALLADA) is a signal peptide. Positions 19-58 (TPTTFNNSPGFVALNFDVIKTHKNVTGPQGEINTNVNVKR) are cleaved as a propeptide — activation peptide. Asn42 carries N-linked (GlcNAc...) asparagine glycosylation. One can recognise a Peptidase A1 domain in the interval 72–384 (YASDITVGSN…DLDDNEISLA (313 aa)). The active site involves Asp90. 90-92 (DTG) contributes to the pepstatin A binding site. The segment covering 103 to 112 (VSCQAGQGQD) has biased composition (polar residues). The disordered stretch occupies residues 103–139 (VSCQAGQGQDPNFCKNEGTYSPSSSSSSQNLNSPFSI). A disulfide bridge links Cys105 with Cys116. Low complexity predominate over residues 123-138 (SPSSSSSSQNLNSPFS). 140–143 (EYGD) lines the pepstatin A pocket. Positions 188, 248, 254, and 270 each coordinate Zn(2+). The active site involves Asp274. Position 274–278 (274–278 (DSGTT)) interacts with pepstatin A. An intrachain disulfide couples Cys312 to Cys350. Asn313 carries N-linked (GlcNAc...) asparagine glycosylation.

Belongs to the peptidase A1 family. As to quaternary structure, monomer.

Its subcellular location is the secreted. The catalysed reaction is Preferential cleavage at the carboxyl of hydrophobic amino acids, but fails to cleave 15-Leu-|-Tyr-16, 16-Tyr-|-Leu-17 and 24-Phe-|-Phe-25 of insulin B chain. Activates trypsinogen, and degrades keratin.. Inhibited by pepstatin A analogs. Its function is as follows. Secreted aspartic peptidases (SAPs) are a group of ten acidic hydrolases considered as key virulence factors. These enzymes supply the fungus with nutrient amino acids as well as are able to degrade the selected host's proteins involved in the immune defense. Induces host inflammatory cytokine production in a proteolytic activity-independent way. Moreover, acts toward human hemoglobin though limited proteolysis to generate a variety of antimicrobial hemocidins, enabling to compete with the other microorganisms of the same physiological niche using the microbicidal peptides generated from the host protein. In terms of biological role, plays a key role in defense against host by cleaving histatin-5 (Hst 5), a peptide from human saliva that carries out fungicidal activity. The cleavage rate decreases in an order of SAP2 &gt; SAP9 &gt; SAP3 &gt; SAP7 &gt; SAP4 &gt; SAP1 &gt; SAP8. The first cleavage occurs between residues 'Lys-17' and 'His-18' of Hst 5, giving DSHAKRHHGYKRKFHEK and HHSHRGY peptides. Simultaneously, the DSHAKRHHGYKRK peptide is also formed. Further fragmentation by SAP3 results in DSHAKRHHGY and KRKFHEK products. The sequence is that of Secreted aspartic protease 3 from Candida albicans (strain SC5314 / ATCC MYA-2876) (Yeast).